Reading from the N-terminus, the 649-residue chain is MPLLSRITGPADLRRLHPEQLPPLAAEIRAFLIDNVTRTGGHLGPNLGVVELSIALHRVFDSPHDRILWDTGHQAYVHKLLTGRQDFSRVRAKDGLSGYPSRAESPHDLIENSHASTALGHADGIAKADQLLGVDRCTVAVIGDGALTGGMAWEALNNIAEAEDRPLVIVVNDNERSYAPTIGGLAHHLATLRTTKGYERFLAWGKDALQRTPVVGPPLFDALHGAKKGFKDAFAPQGMFEDLGLKYLGPIDGHDIAGVEQALRRARNFGGPVIVHCLTVKGRGYRPAEQDEADRFHAVNPIDPYTCLPISPSAGASWTSVFGKEMLALGAERPELVAVTAAMLHPVGLGPFAKAYPGRTFDVGIAEQHAVASAAGLATGGLHPVVAVYATFLNRAFDQVLMDVALHRLGVTFVLDRAGVTGNDGASHNGMWDLSVLQVVPGLRIAAPRDAARVREHVRQAVAVEDAPTVVRFPKGELGPEAPAIERIGGVDVLARTGPAPDVLLVAVGPMAAACLDAAALLAADGITATVVDPCWVKPVDPALVELAGAHRMVVTVEDNGRTGGVGAALAQAMRDADVDTPLRDLGIPQEFLAHASRGEILEEIGLTGTGVAAQTAAHARRLLPGTGTRPGAQEYRPRMPLTDWSEPA.

Thiamine diphosphate-binding positions include histidine 73 and 113-115 (SHA). Aspartate 144 lines the Mg(2+) pocket. Thiamine diphosphate contacts are provided by residues 145–146 (GA), asparagine 174, tyrosine 285, and glutamate 367. Asparagine 174 is a binding site for Mg(2+). A disordered region spans residues 623–649 (LLPGTGTRPGAQEYRPRMPLTDWSEPA).

Belongs to the transketolase family. DXPS subfamily. Homodimer. Mg(2+) serves as cofactor. Thiamine diphosphate is required as a cofactor.

The catalysed reaction is D-glyceraldehyde 3-phosphate + pyruvate + H(+) = 1-deoxy-D-xylulose 5-phosphate + CO2. It functions in the pathway metabolic intermediate biosynthesis; 1-deoxy-D-xylulose 5-phosphate biosynthesis; 1-deoxy-D-xylulose 5-phosphate from D-glyceraldehyde 3-phosphate and pyruvate: step 1/1. In terms of biological role, catalyzes the acyloin condensation reaction between C atoms 2 and 3 of pyruvate and glyceraldehyde 3-phosphate to yield 1-deoxy-D-xylulose-5-phosphate (DXP). This is 1-deoxy-D-xylulose-5-phosphate synthase 1 from Kitasatospora griseola (Streptomyces griseolosporeus).